The chain runs to 175 residues: Large ribosomal subunit protein uL6 (175 aa).

It belongs to the universal ribosomal protein uL6 family. In terms of assembly, part of the 50S ribosomal subunit.

This protein binds to the 23S rRNA, and is important in its secondary structure. It is located near the subunit interface in the base of the L7/L12 stalk, and near the tRNA binding site of the peptidyltransferase center. The sequence is that of Large ribosomal subunit protein uL6 from Xanthomonas campestris pv. campestris (strain 8004).